Consider the following 491-residue polypeptide: Nicotinamide phosphoribosyltransferase (491 aa).

At Met1 the chain carries N-acetylmethionine. Residue Tyr188 is modified to Phosphotyrosine. Arg196 provides a ligand contact to diphosphate. Residue Asp219 coordinates beta-nicotinamide D-ribonucleotide. Residues His247 and Arg311 each contribute to the diphosphate site. Beta-nicotinamide D-ribonucleotide is bound by residues 311-313 (RPD), 353-354 (GD), Gly384, and Arg392. A Phosphoserine modification is found at Ser472.

The protein belongs to the NAPRTase family. Homodimer. Expressed in various tissues. At the highest level in liver and at the second highest in heart. The amount is higher in heart than in lung.

It localises to the nucleus. It is found in the cytoplasm. The protein localises to the secreted. It catalyses the reaction beta-nicotinamide D-ribonucleotide + diphosphate = 5-phospho-alpha-D-ribose 1-diphosphate + nicotinamide + H(+). The protein operates within cofactor biosynthesis; NAD(+) biosynthesis; nicotinamide D-ribonucleotide from 5-phospho-alpha-D-ribose 1-diphosphate and nicotinamide: step 1/1. Its function is as follows. Catalyzes the condensation of nicotinamide with 5-phosphoribosyl-1-pyrophosphate to yield nicotinamide mononucleotide, an intermediate in the biosynthesis of NAD. It is the rate limiting component in the mammalian NAD biosynthesis pathway. The secreted form behaves both as a cytokine with immunomodulating properties and an adipokine with anti-diabetic properties, it has no enzymatic activity, partly because of lack of activation by ATP, which has a low level in extracellular space and plasma. Plays a role in the modulation of circadian clock function. NAMPT-dependent oscillatory production of NAD regulates oscillation of clock target gene expression by releasing the core clock component: CLOCK-BMAL1 heterodimer from NAD-dependent SIRT1-mediated suppression. The chain is Nicotinamide phosphoribosyltransferase (Nampt) from Rattus norvegicus (Rat).